A 325-amino-acid chain; its full sequence is Heat-inducible transcription repressor HrcA (325 aa).

This sequence belongs to the HrcA family.

Negative regulator of class I heat shock genes (grpE-dnaK-dnaJ and groELS operons). Prevents heat-shock induction of these operons. The sequence is that of Heat-inducible transcription repressor HrcA from Staphylococcus aureus (strain bovine RF122 / ET3-1).